The following is a 128-amino-acid chain: Glycine cleavage system H protein (128 aa).

One can recognise a Lipoyl-binding domain in the interval 25–107 (TITVGITHHA…YGAGWFFKLK (83 aa)). N6-lipoyllysine is present on lysine 66.

This sequence belongs to the GcvH family. The glycine cleavage system is composed of four proteins: P, T, L and H. The cofactor is (R)-lipoate.

The glycine cleavage system catalyzes the degradation of glycine. The H protein shuttles the methylamine group of glycine from the P protein to the T protein. The protein is Glycine cleavage system H protein of Neisseria meningitidis serogroup B (strain ATCC BAA-335 / MC58).